The chain runs to 451 residues: MTPKKMTHYQRHYHITTFGCQMNKADSERMAGILENMGFIWSEDPNQADLILYNTCTIRDNAEQKVYSYLGRQAKRKHENPDLTLIVAGCVAQQEGEQILRRVPELDLVMGPQHANRLEDLLQQVFDGNQVVATEPIHIIEDITKPRRDSTITAWVNVIYGCNERCSYCVVPNVRGVEQSRTPEAILAEMELLGKQGYKEVTLLGQNIDAYGRDLPGVTESGRHQHTLTDLLYTVHDVVGIERIRFATSHPRYFTERLIAACQELSKVCEHFHIPFQSGDNDILKAMKRGYTHEKYRQIIDKIRDYMPDASISADAIVGFPGETEEQFENTLKLVEDIGFDQLNTAAYSPRPGTPAALWDNQLSEEVKSDRLQRLNHLVAQKAAERSQRYLGRIEEVLVEDQNPKDSTQVMGRTRGNRLTFFKGDINQLKGRLIKVKITEVRAFSLTGEIV.

The MTTase N-terminal domain maps to 11 to 127 (RHYHITTFGC…LEDLLQQVFD (117 aa)). Residues C20, C56, C90, C162, C166, and C169 each contribute to the [4Fe-4S] cluster site. The Radical SAM core domain maps to 148–385 (RDSTITAWVN…NHLVAQKAAE (238 aa)). One can recognise a TRAM domain in the interval 388-451 (QRYLGRIEEV…RAFSLTGEIV (64 aa)).

Belongs to the methylthiotransferase family. MiaB subfamily. Monomer. [4Fe-4S] cluster serves as cofactor.

It is found in the cytoplasm. The enzyme catalyses N(6)-dimethylallyladenosine(37) in tRNA + (sulfur carrier)-SH + AH2 + 2 S-adenosyl-L-methionine = 2-methylsulfanyl-N(6)-dimethylallyladenosine(37) in tRNA + (sulfur carrier)-H + 5'-deoxyadenosine + L-methionine + A + S-adenosyl-L-homocysteine + 2 H(+). Catalyzes the methylthiolation of N6-(dimethylallyl)adenosine (i(6)A), leading to the formation of 2-methylthio-N6-(dimethylallyl)adenosine (ms(2)i(6)A) at position 37 in tRNAs that read codons beginning with uridine. This Rippkaea orientalis (strain PCC 8801 / RF-1) (Cyanothece sp. (strain PCC 8801)) protein is tRNA-2-methylthio-N(6)-dimethylallyladenosine synthase.